The sequence spans 842 residues: Cation/H(+) antiporter 20 (842 aa).

Transmembrane regions (helical) follow at residues 26–46 (FPLL…LAVL), 55–75 (VIAE…RNMA), 86–106 (MPIL…LVGL), 122–142 (GIAV…AFVI), 155–175 (YAEF…PVLA), 193–213 (MAAA…AVAL), 228–248 (LVSL…LVVI), 283–303 (FATD…GLTI), 320–340 (FVSG…TDVA), 353–373 (LVVV…AVMV), 380–400 (ALTL…VLNI), and 413–433 (AILV…VMAI). Positions 585–595 (DHGHSHHHQDG) are enriched in basic and acidic residues. Residues 585–605 (DHGHSHHHQDGGGDGNVPENV) are disordered.

This sequence belongs to the monovalent cation:proton antiporter 2 (CPA2) transporter (TC 2.A.37) family. CHX (TC 2.A.37.4) subfamily. Expressed in leaves and stems. Preferentially expressed in guards cells.

The protein resides in the endomembrane system. Operates as a K(+)/H(+) antiporter that maintains K(+) homeostasis in guard cells and could regulate pH. Plays a critical role in osmoregulation through the control of stomates opening. The polypeptide is Cation/H(+) antiporter 20 (CHX20) (Arabidopsis thaliana (Mouse-ear cress)).